We begin with the raw amino-acid sequence, 189 residues long: Casparian strip membrane protein 1 (189 aa).

Residues 1–25 (MMQAESGSAEAKGPLPPPVGRKRRG) lie on the Cytoplasmic side of the membrane. A helical transmembrane segment spans residues 26–46 (LGILDFLLRLLAIGATLSAAI). At 47–73 (TMGTTNETLQFFTQFFQFKARFYDLSA) the chain is on the extracellular side. Residue asparagine 52 is glycosylated (N-linked (GlcNAc...) asparagine). The helical transmembrane segment at 74–94 (FIYFVIANAIVGGYLLLSLPI) threads the bilayer. At 95–108 (SILNIVRPRAASSR) the chain is on the cytoplasmic side. A helical transmembrane segment spans residues 109–129 (VFLIFFDTVMVAVCTSGAAAA). Over 130–158 (VAILYVARKGNSRTNWFAICQRFNSFCNQ) the chain is Extracellular. Residues 159–179 (AIGAVSASFAGVVFLILLVLL) form a helical membrane-spanning segment. Residues 180–189 (SASTLYRRRP) are Cytoplasmic-facing.

It belongs to the Casparian strip membrane proteins (CASP) family. In terms of assembly, homodimer and heterodimers.

It localises to the cell membrane. Its function is as follows. Regulates membrane-cell wall junctions and localized cell wall deposition. Required for establishment of the Casparian strip membrane domain (CSD) and the subsequent formation of Casparian strips, a cell wall modification of the root endodermis that determines an apoplastic barrier between the intraorganismal apoplasm and the extraorganismal apoplasm and prevents lateral diffusion. The sequence is that of Casparian strip membrane protein 1 from Picea glauca (White spruce).